A 156-amino-acid chain; its full sequence is Small ribosomal subunit protein uS7 (156 aa).

The protein belongs to the universal ribosomal protein uS7 family. Part of the 30S ribosomal subunit. Contacts proteins S9 and S11.

One of the primary rRNA binding proteins, it binds directly to 16S rRNA where it nucleates assembly of the head domain of the 30S subunit. Is located at the subunit interface close to the decoding center, probably blocks exit of the E-site tRNA. The polypeptide is Small ribosomal subunit protein uS7 (Glaesserella parasuis serovar 5 (strain SH0165) (Haemophilus parasuis)).